A 1297-amino-acid polypeptide reads, in one-letter code: DNA-directed RNA polymerase subunit beta'' (1297 aa).

Zn(2+) is bound by residues C220, C293, C300, and C303. Residues 1278–1288 show a composition bias toward basic residues; it reads RRRKQNTKTRK. Residues 1278-1297 form a disordered region; sequence RRRKQNTKTRKNNLFSLNEK.

The protein belongs to the RNA polymerase beta' chain family. RpoC2 subfamily. In terms of assembly, in plastids the minimal PEP RNA polymerase catalytic core is composed of four subunits: alpha, beta, beta', and beta''. When a (nuclear-encoded) sigma factor is associated with the core the holoenzyme is formed, which can initiate transcription. Zn(2+) serves as cofactor.

Its subcellular location is the plastid. The protein localises to the chloroplast. It carries out the reaction RNA(n) + a ribonucleoside 5'-triphosphate = RNA(n+1) + diphosphate. Its function is as follows. DNA-dependent RNA polymerase catalyzes the transcription of DNA into RNA using the four ribonucleoside triphosphates as substrates. This chain is DNA-directed RNA polymerase subunit beta'', found in Welwitschia mirabilis (Tree tumbo).